We begin with the raw amino-acid sequence, 206 residues long: RILP-like protein 2 (206 aa).

The segment at 1–29 is disordered; the sequence is MEEPPLREEEEEEEEDEAGPEGALGKSPL. Over residues 8–19 the composition is skewed to acidic residues; sequence EEEEEEEEDEAG. The RH1 domain maps to 19–108; it reads GPEGALGKSP…RREGSAAGPE (90 aa). Positions 67-159 form a coiled coil; sequence LEMLETLVNE…VQEELQCYKS (93 aa). The 73-residue stretch at 125 to 197 folds into the RH2 domain; that stretch reads RPRFTLQELR…KEEKTIIRKL (73 aa). The disordered stretch occupies residues 161–189; sequence LIPPREGPGGRREKEALFPRGSNANSNKE. Basic and acidic residues predominate over residues 168–177; it reads PGGRREKEAL.

It belongs to the RILPL family. As to quaternary structure, homodimer. Interacts with RAC1. Interacts (via N-terminus) with MYO5A, the interaction is required for its role in dendrite formation. Interacts with RAB8A; interaction is dependent on the phosphorylation of RAB8A on 'Thr-72'. Interacts with RAB10 and RAB12; interaction is dependent on the phosphorylation of 'Thr-73' on RAB10 and 'Ser-105' on RAB12.

The protein resides in the cytoplasm. It localises to the cytosol. It is found in the cytoskeleton. The protein localises to the microtubule organizing center. Its subcellular location is the centrosome. The protein resides in the cell projection. It localises to the cilium. Functionally, involved in cell shape and neuronal morphogenesis, positively regulating the establishment and maintenance of dendritic spines. Plays a role in cellular protein transport, including protein transport away from primary cilia. May function via activation of RAC1 and PAK1. The sequence is that of RILP-like protein 2 (RILPL2) from Bos taurus (Bovine).